A 473-amino-acid chain; its full sequence is Pre-mRNA-splicing factor PRP46 (473 aa).

Positions 1–14 (MSTSLETPSGTSAG) are enriched in polar residues. 2 disordered regions span residues 1-21 (MSTS…VASG) and 103-126 (GPNV…QAVA). WD repeat units lie at residues 180–219 (GHMG…LKLS), 222–261 (GHIS…VIRH), 264–303 (GHFS…NIFT), 306–347 (GHTS…NTLT), 349–388 (HKKS…FVNN), 391–429 (GHEA…PFQH), and 440–473 (DAEA…SEQA).

This sequence belongs to the WD repeat PRL1/PRL2 family. Associated with the spliceosome.

The protein resides in the cytoplasm. The protein localises to the nucleus. Functionally, involved in pre-mRNA splicing and required for cell cycle progression at G2/M. This Cryptococcus neoformans var. neoformans serotype D (strain B-3501A) (Filobasidiella neoformans) protein is Pre-mRNA-splicing factor PRP46 (PRP46).